The chain runs to 188 residues: Defensin-like protein 99 (188 aa).

The N-terminal stretch at 1–28 is a signal peptide; the sequence is MGSLKLSTVVVTALVVCLSILLISPTEA. 7 cysteine pairs are disulfide-bonded: cysteine 37–cysteine 95, cysteine 45–cysteine 77, cysteine 58–cysteine 92, cysteine 62–cysteine 94, cysteine 123–cysteine 178, cysteine 137–cysteine 175, and cysteine 141–cysteine 177.

It belongs to the DEFL family.

Its subcellular location is the secreted. This is Defensin-like protein 99 from Arabidopsis thaliana (Mouse-ear cress).